The primary structure comprises 445 residues: Homogentisate 1,2-dioxygenase (445 aa).

Lys-98 carries the N6-acetyllysine modification. Fe cation contacts are provided by His-335, Glu-341, and His-371. Position 414 is an N6-succinyllysine (Lys-414).

It belongs to the homogentisate dioxygenase family. As to quaternary structure, homohexamer arranged as a dimer of trimers. It depends on Fe cation as a cofactor. Highest expression in the prostate, small intestine, colon, kidney and liver.

It catalyses the reaction homogentisate + O2 = 4-maleylacetoacetate + H(+). Its pathway is amino-acid degradation; L-phenylalanine degradation; acetoacetate and fumarate from L-phenylalanine: step 4/6. In terms of biological role, catalyzes the conversion of homogentisate to maleylacetoacetate. This Homo sapiens (Human) protein is Homogentisate 1,2-dioxygenase (HGD).